We begin with the raw amino-acid sequence, 559 residues long: (R)-mandelonitrile lyase 1 (559 aa).

The N-terminal stretch at 1–27 (MEKSTMSVILFVLHLLVLHLQYSEVHS) is a signal peptide. N-linked (GlcNAc...) asparagine glycans are attached at residues Asn-30 and Asn-44. FAD is bound by residues 63 to 64 (TS), 82 to 83 (ER), Thr-133, and 137 to 140 (NAGV). Residues Asn-145, Asn-162, Asn-178, and Asn-218 are each glycosylated (N-linked (GlcNAc...) asparagine). Val-244 contacts FAD. N-linked (GlcNAc...) asparagine glycans are attached at residues Asn-252, Asn-255, Asn-309, Asn-380, Asn-402, Asn-420, and Asn-467. A disulfide bridge links Cys-427 with Cys-478. Position 485 (Tyr-485) interacts with substrate. 486 to 487 (WH) is an FAD binding site. His-487 (proton donor) is an active-site residue. The active-site Proton acceptor is His-525. 526-527 (PQ) serves as a coordination point for FAD.

The protein belongs to the GMC oxidoreductase family. In terms of assembly, monomer. Requires FAD as cofactor.

The catalysed reaction is (R)-mandelonitrile = benzaldehyde + hydrogen cyanide. In terms of biological role, involved in cyanogenesis, the release of HCN from injured tissues. Catalyzes the stereospecific addition of HCN to a variety of aldehydes in vitro. It is a major seed constituent, and could have the additional role of a storage form for reduced nitrogen. This is (R)-mandelonitrile lyase 1 (MDL1) from Prunus dulcis (Almond).